The sequence spans 540 residues: NADH-quinone oxidoreductase subunit N 1 (540 aa).

Helical transmembrane passes span 11-31 (ILPELMLLLLGLLVLGSDVLT), 52-72 (AVGLGLVFIVGLVQSRFLFTV), 109-129 (FTMIARLTFIGAAFLTTLLAM), 142-162 (ALLIFSTLGMSIMAAATEFIL), 195-215 (FLFGSLSSAIFLYGISLTYGF), 250-270 (LILGMLFIIAGLGYKISVVPF), 284-306 (PVTAFLSTASKAAGFLLLYRLLT), 324-344 (WTSILAILALVTVIVGNLAAL), 352-372 (LLAYSSIGHAGFLLLAVLLWA), 386-406 (LIYYLIVYSLTNLGSFGVLAV), 431-451 (LMMTILILSLAGIPPLAGFWA), 464-486 (AVPLVTIAVIMTVVSLYYYLRFL), and 508-528 (AAIILSTVLVVLLGLLPNLIW).

This sequence belongs to the complex I subunit 2 family. As to quaternary structure, NDH-1 is composed of 14 different subunits. Subunits NuoA, H, J, K, L, M, N constitute the membrane sector of the complex.

Its subcellular location is the cell membrane. The catalysed reaction is a quinone + NADH + 5 H(+)(in) = a quinol + NAD(+) + 4 H(+)(out). In terms of biological role, NDH-1 shuttles electrons from NADH, via FMN and iron-sulfur (Fe-S) centers, to quinones in the respiratory chain. The immediate electron acceptor for the enzyme in this species is believed to be ubiquinone. Couples the redox reaction to proton translocation (for every two electrons transferred, four hydrogen ions are translocated across the cytoplasmic membrane), and thus conserves the redox energy in a proton gradient. This is NADH-quinone oxidoreductase subunit N 1 from Roseiflexus castenholzii (strain DSM 13941 / HLO8).